The sequence spans 847 residues: Glycogen phosphorylase, liver form (847 aa).

At A2 the chain carries N-acetylalanine. S15 is subject to Phosphoserine; by PHK; in form phosphorylase a. AMP contacts are provided by residues 43–45, Y76, and R310; that span reads DRN. K364 carries the N6-succinyllysine modification. K470 is modified (N6-acetyllysine). 3 positions are modified to phosphoserine: S524, S561, and S639. K681 is modified (N6-(pyridoxal phosphate)lysine). At K796 the chain carries N6-acetyllysine.

The protein belongs to the glycogen phosphorylase family. In terms of assembly, homodimer; enzymatically active. Interacts with PPP1R3B; recruits the phosphatase PP1 which dephosphorylates and inactivates PYGL/glycogen phosphorylase. It depends on pyridoxal 5'-phosphate as a cofactor. Acetylation, which is up-regulated by glucose and insulin and down-regulated by glucagon, inhibits the glycogen phosphorylase activity by promoting PPP1R3B-mediated recruitment of phosphatase PP1 and Ser-15 dephosphorylation. In terms of processing, phosphorylation at Ser-15 converts inactive phosphorylase b into active phosphorylase a. Dephosphorylation of Ser-15 by phosphatase PP1 inactivates the enzyme.

It is found in the cytoplasm. Its subcellular location is the cytosol. It carries out the reaction [(1-&gt;4)-alpha-D-glucosyl](n) + phosphate = [(1-&gt;4)-alpha-D-glucosyl](n-1) + alpha-D-glucose 1-phosphate. Allosterically regulated through the non-covalent binding of metabolites, being activated by AMP and inhibited by ATP, ADP, and glucose-6-phosphate. The activity is also controlled by post-translational modifications including phosphorylation and acetylation. Its function is as follows. Allosteric enzyme that catalyzes the rate-limiting step in glycogen catabolism, the phosphorolytic cleavage of glycogen to produce glucose-1-phosphate, and plays a central role in maintaining cellular and organismal glucose homeostasis. The polypeptide is Glycogen phosphorylase, liver form (Homo sapiens (Human)).